A 348-amino-acid polypeptide reads, in one-letter code: Quinolinate synthase (348 aa).

Positions 47 and 68 each coordinate iminosuccinate. Cys113 is a [4Fe-4S] cluster binding site. Iminosuccinate is bound by residues 139-141 and Ser156; that span reads YAN. Position 200 (Cys200) interacts with [4Fe-4S] cluster. Residues 226 to 228 and Thr243 each bind iminosuccinate; that span reads HPE. Position 297 (Cys297) interacts with [4Fe-4S] cluster.

This sequence belongs to the quinolinate synthase family. Type 1 subfamily. Requires [4Fe-4S] cluster as cofactor.

It is found in the cytoplasm. It carries out the reaction iminosuccinate + dihydroxyacetone phosphate = quinolinate + phosphate + 2 H2O + H(+). The protein operates within cofactor biosynthesis; NAD(+) biosynthesis; quinolinate from iminoaspartate: step 1/1. Catalyzes the condensation of iminoaspartate with dihydroxyacetone phosphate to form quinolinate. This Sodalis glossinidius (strain morsitans) protein is Quinolinate synthase.